The primary structure comprises 141 residues: D-aminoacyl-tRNA deacylase (141 aa).

Positions 133 to 134 (GP) match the Gly-cisPro motif, important for rejection of L-amino acids motif.

Belongs to the DTD family. As to quaternary structure, homodimer.

The protein localises to the cytoplasm. It carries out the reaction glycyl-tRNA(Ala) + H2O = tRNA(Ala) + glycine + H(+). The enzyme catalyses a D-aminoacyl-tRNA + H2O = a tRNA + a D-alpha-amino acid + H(+). Functionally, an aminoacyl-tRNA editing enzyme that deacylates mischarged D-aminoacyl-tRNAs. Also deacylates mischarged glycyl-tRNA(Ala), protecting cells against glycine mischarging by AlaRS. Acts via tRNA-based rather than protein-based catalysis; rejects L-amino acids rather than detecting D-amino acids in the active site. By recycling D-aminoacyl-tRNA to D-amino acids and free tRNA molecules, this enzyme counteracts the toxicity associated with the formation of D-aminoacyl-tRNA entities in vivo and helps enforce protein L-homochirality. This Kineococcus radiotolerans (strain ATCC BAA-149 / DSM 14245 / SRS30216) protein is D-aminoacyl-tRNA deacylase.